Here is a 396-residue protein sequence, read N- to C-terminus: MQTFVLLALVAACSAAVIQVPTHKTESLRAKLIKEGKYTAFLASQHAARAQQLNTGFQPFVDYFDDFYLGNITLGTPPQPATVVLDTGSSNLWVIDAACKTQACNGYPDSGYTKQKFDTTKSTTFVKETRKFSIQYGSGSCNGYLGKDVLNFGGLTVQSQEFGVSTHLADVFGYQPVDGILGLGWPALAVDQVVPPMQNLIAQKQLDAPLFTVWLDRNLQIAQGTPGGLITYGAIDTVNCAKQVTYVPLSAKTYWQFPLDAFAVGTYSETKKDQVISDTGTSWLGAPNTIVSAIVKQTKAVFDWSTELYTVDCSTMKTQPDLIFTIGGAQFPVKSVEYVLDLQLGGGKCALAVFSMGSGGFGPSWILGDTFIRQYCNVYDIGNGQIGFATAVHKGL.

The N-terminal stretch at 1–15 is a signal peptide; the sequence is MQTFVLLALVAACSA. The Peptidase A1 domain occupies 68–389; sequence YLGNITLGTP…DIGNGQIGFA (322 aa). N71 is a glycosylation site (N-linked (GlcNAc...) asparagine). The active site involves D86. Cysteines 99 and 104 form a disulfide. D278 is a catalytic residue. An intrachain disulfide couples C313 to C349.

It belongs to the peptidase A1 family. As to quaternary structure, interacts with B.thuringiensis endotoxin Cry6Aa; the interaction prevents Cry6Aa proteolysis by host gut proteases.

It localises to the cytoplasm. Its subcellular location is the lysosome. The protein localises to the secreted. Aspartic protease, which is part of the necrosis cell death pathway. Promotes B.thuringiensis Cry6Aa stability by preventing its proteolysis by host gut proteases. Required for Cry6Aa-induced necrotic death of intestinal cells. Cry6Aa uptake into the host intestinal cells triggers an increase in intracellular Ca(2+) levels leading to lysosome rupture and to the subsequent release of asp-1 which leads to necrosis. This Caenorhabditis elegans protein is Aspartic protease 1.